The primary structure comprises 879 residues: Valine--tRNA ligase (879 aa).

The 'HIGH' region signature appears at 45 to 55 (PNVTGKLHLGH). A 'KMSKS' region motif is present at residues 521–525 (KMSKS). Position 524 (Lys524) interacts with ATP. Residues 806–879 (LTELVNVDEE…ERIQDLKESK (74 aa)) adopt a coiled-coil conformation.

The protein belongs to the class-I aminoacyl-tRNA synthetase family. ValS type 1 subfamily. As to quaternary structure, monomer.

It is found in the cytoplasm. The catalysed reaction is tRNA(Val) + L-valine + ATP = L-valyl-tRNA(Val) + AMP + diphosphate. Functionally, catalyzes the attachment of valine to tRNA(Val). As ValRS can inadvertently accommodate and process structurally similar amino acids such as threonine, to avoid such errors, it has a 'posttransfer' editing activity that hydrolyzes mischarged Thr-tRNA(Val) in a tRNA-dependent manner. The sequence is that of Valine--tRNA ligase from Lactobacillus acidophilus (strain ATCC 700396 / NCK56 / N2 / NCFM).